Here is a 342-residue protein sequence, read N- to C-terminus: S-adenosylmethionine:tRNA ribosyltransferase-isomerase (342 aa).

It belongs to the QueA family. As to quaternary structure, monomer.

The protein localises to the cytoplasm. It carries out the reaction 7-aminomethyl-7-carbaguanosine(34) in tRNA + S-adenosyl-L-methionine = epoxyqueuosine(34) in tRNA + adenine + L-methionine + 2 H(+). It functions in the pathway tRNA modification; tRNA-queuosine biosynthesis. Functionally, transfers and isomerizes the ribose moiety from AdoMet to the 7-aminomethyl group of 7-deazaguanine (preQ1-tRNA) to give epoxyqueuosine (oQ-tRNA). The polypeptide is S-adenosylmethionine:tRNA ribosyltransferase-isomerase (Listeria innocua serovar 6a (strain ATCC BAA-680 / CLIP 11262)).